The sequence spans 283 residues: Bis(5'-nucleosyl)-tetraphosphatase, symmetrical (283 aa).

It belongs to the Ap4A hydrolase family.

The enzyme catalyses P(1),P(4)-bis(5'-adenosyl) tetraphosphate + H2O = 2 ADP + 2 H(+). Its function is as follows. Hydrolyzes diadenosine 5',5'''-P1,P4-tetraphosphate to yield ADP. The protein is Bis(5'-nucleosyl)-tetraphosphatase, symmetrical of Pseudomonas aeruginosa (strain LESB58).